Reading from the N-terminus, the 1832-residue chain is Zinc finger protein 646 (1832 aa).

8 consecutive C2H2-type zinc fingers follow at residues 8–31 (LSCS…ELLH), 48–70 (YRCQ…RRTH), 75–97 (FPCT…MRTH), 239–261 (YKCS…RQSH), 266–288 (YPCA…SRLH), 294–316 (YHCP…QQSH), 374–396 (FRCG…RKSH), and 401–424 (YPCS…RAHH). The disordered stretch occupies residues 26-47 (HRELLHPSPNQDSEEADSIPRP). A compositionally biased stretch (basic residues) spans 94–108 (MRTHAPEGRRRHRPP). The disordered stretch occupies residues 94 to 200 (MRTHAPEGRR…TNSARAPPLP (107 aa)). The segment covering 313-329 (QQSHEGERQEPRWEEKG) has biased composition (basic and acidic residues). Residues 313-346 (QQSHEGERQEPRWEEKGMPTTNGHTDESSQDQLP) form a disordered region. K451 participates in a covalent cross-link: Glycyl lysine isopeptide (Lys-Gly) (interchain with G-Cter in SUMO2). 2 C2H2-type zinc fingers span residues 465 to 487 (YKCS…RHSH) and 492 to 514 (YQCS…VRVH). Residues K534 and K557 each participate in a glycyl lysine isopeptide (Lys-Gly) (interchain with G-Cter in SUMO2) cross-link. The C2H2-type 11 zinc-finger motif lies at 575-597 (HICSICGLLFEDAESLERHGLTH). S612 is subject to Phosphoserine. 2 C2H2-type zinc fingers span residues 617 to 639 (FACR…RQTH) and 644 to 666 (FSCG…LRRH). Residues 660–810 (KNHLRRHSRR…QPNSSSHSAN (151 aa)) are disordered. The span at 661 to 678 (NHLRRHSRRRSRRHRKRA) shows a compositional bias: basic residues. K688 participates in a covalent cross-link: Glycyl lysine isopeptide (Lys-Gly) (interchain with G-Cter in SUMO2). Residues 735–767 (EGDKCGLERDETHFQGDKESGGTGEGLERKDAS) show a composition bias toward basic and acidic residues. Polar residues predominate over residues 798 to 810 (ATGQPNSSSHSAN). C2H2-type zinc fingers lie at residues 821-843 (HTCS…RPCH), 848-870 (YQCS…FQNH), and 881-904 (FLCC…RQAH). The disordered stretch occupies residues 901–931 (RQAHSSSGMTEGSEEEGEEEGVAEAAPARSP). Residues 912–922 (GSEEEGEEEGV) show a composition bias toward acidic residues. The C2H2-type 17; degenerate zinc finger occupies 958–980 (HICGCCGQTYDDLGSLERHHQSQ). 2 consecutive C2H2-type zinc fingers follow at residues 1052 to 1074 (FRCN…RKIH) and 1079 to 1101 (FLCP…LRNH). The interval 1103–1148 (RCKGSEPQVGPIPEAAGSSELQVGPIPEGGSNKPQHMAEEGPGQAE) is disordered. Glycyl lysine isopeptide (Lys-Gly) (interchain with G-Cter in SUMO2) cross-links involve residues K1157, K1168, and K1178. 6 C2H2-type zinc fingers span residues 1203 to 1225 (FSCE…RQSH), 1230 to 1252 (FGCQ…RRIH), 1258 to 1280 (FRCS…QRVH), 1299 to 1321 (FRCG…RRSH), 1326 to 1348 (YSCP…QRLH), and 1364 to 1386 (VRCA…LREH). The tract at residues 1274–1294 (ASHQRVHMERRGGGGTRKATR) is disordered. 2 disordered regions span residues 1377 to 1481 (GSLE…WVPQ) and 1509 to 1529 (TLSH…QPGS). Positions 1378 to 1393 (SLERHLREHEETEREP) are enriched in basic and acidic residues. A compositionally biased stretch (polar residues) spans 1406 to 1417 (SEANLTGSQGLE). Over residues 1427 to 1438 (PHLEDGVPRPGE) the composition is skewed to basic and acidic residues. Residues 1460 to 1475 (GKAGGWPVGGGLGNHS) show a composition bias toward gly residues. C2H2-type zinc fingers lie at residues 1557 to 1579 (HYCL…SHNH), 1585 to 1607 (FACP…LQAH), 1677 to 1699 (FRCT…QKAH), 1704 to 1726 (YPCS…SRTH), 1732 to 1754 (HCCS…GRVH), and 1761 to 1783 (FTCP…QQQH). The disordered stretch occupies residues 1606–1672 (AHARGHSQVP…QAVTSMAAED (67 aa)). The tract at residues 1781–1832 (QQHQEEWTVAGSGAPVAPVTGRGDLPLPPPPTPTTPLLDPSPQWPADLSFSL) is disordered.

It belongs to the krueppel C2H2-type zinc-finger protein family.

The protein localises to the nucleus. In terms of biological role, may be involved in transcriptional regulation. The protein is Zinc finger protein 646 of Homo sapiens (Human).